The primary structure comprises 490 residues: Aspartyl/glutamyl-tRNA(Asn/Gln) amidotransferase subunit B (490 aa).

It belongs to the GatB/GatE family. GatB subfamily. In terms of assembly, heterotrimer of A, B and C subunits.

The catalysed reaction is L-glutamyl-tRNA(Gln) + L-glutamine + ATP + H2O = L-glutaminyl-tRNA(Gln) + L-glutamate + ADP + phosphate + H(+). The enzyme catalyses L-aspartyl-tRNA(Asn) + L-glutamine + ATP + H2O = L-asparaginyl-tRNA(Asn) + L-glutamate + ADP + phosphate + 2 H(+). In terms of biological role, allows the formation of correctly charged Asn-tRNA(Asn) or Gln-tRNA(Gln) through the transamidation of misacylated Asp-tRNA(Asn) or Glu-tRNA(Gln) in organisms which lack either or both of asparaginyl-tRNA or glutaminyl-tRNA synthetases. The reaction takes place in the presence of glutamine and ATP through an activated phospho-Asp-tRNA(Asn) or phospho-Glu-tRNA(Gln). The sequence is that of Aspartyl/glutamyl-tRNA(Asn/Gln) amidotransferase subunit B from Burkholderia vietnamiensis (strain G4 / LMG 22486) (Burkholderia cepacia (strain R1808)).